The primary structure comprises 499 residues: Beta-amylase (499 aa).

3 residues coordinate substrate: aspartate 55, histidine 95, and aspartate 103. Residue glutamate 188 is the Proton donor of the active site. Positions 298, 303, and 345 each coordinate substrate. Glutamate 383 (proton acceptor) is an active-site residue. Residues 384-385 and arginine 423 contribute to the substrate site; that span reads NA.

It belongs to the glycosyl hydrolase 14 family. In terms of assembly, homotetramer.

The enzyme catalyses Hydrolysis of (1-&gt;4)-alpha-D-glucosidic linkages in polysaccharides so as to remove successive maltose units from the non-reducing ends of the chains.. This is Beta-amylase (BMY1) from Ipomoea batatas (Sweet potato).